We begin with the raw amino-acid sequence, 396 residues long: Ribosomal RNA large subunit methyltransferase I (396 aa).

In terms of domain architecture, PUA spans 2 to 81 (SVRLVLAKGR…ESIDIAFFSR (80 aa)).

This sequence belongs to the methyltransferase superfamily. RlmI family.

It localises to the cytoplasm. The enzyme catalyses cytidine(1962) in 23S rRNA + S-adenosyl-L-methionine = 5-methylcytidine(1962) in 23S rRNA + S-adenosyl-L-homocysteine + H(+). In terms of biological role, specifically methylates the cytosine at position 1962 (m5C1962) of 23S rRNA. The polypeptide is Ribosomal RNA large subunit methyltransferase I (Shigella flexneri serotype 5b (strain 8401)).